Reading from the N-terminus, the 421-residue chain is Osmoprotective compounds-binding protein GgtB (421 aa).

Residues 1 to 18 (MKFFKITTLIISLIVLTS) form the signal peptide. Cys19 carries N-palmitoyl cysteine lipidation. The S-diacylglycerol cysteine moiety is linked to residue Cys19.

Belongs to the bacterial solute-binding protein 1 family. In terms of assembly, the complex is composed of two ATP-binding proteins (GgtA), two transmembrane proteins (GgtC and GgtD) and a solute-binding protein (GgtB).

Its subcellular location is the cell membrane. Its function is as follows. Part of the ABC transporter complex GgtABCD involved in the uptake of the osmoprotective compounds glucosylglycerol (GG), sucrose and trehalose. Binds glucosylglycerol and exhibits a somewhat lower affinity towards sucrose and a substantially lower affinity towards trehalose. The sequence is that of Osmoprotective compounds-binding protein GgtB from Synechocystis sp. (strain ATCC 27184 / PCC 6803 / Kazusa).